The primary structure comprises 524 residues: Serine/threonine-protein kinase PAK 2 (524 aa).

The tract at residues 1–81 (MSDNGELEDK…PEISPPSDFE (81 aa)) is disordered. Position 2 is an N-acetylserine (Ser2). Phosphoserine is present on residues Ser2, Ser20, Ser55, Ser58, and Ser59. Thr60 is subject to Phosphothreonine. N6-acetyllysine is present on Lys62. Position 64 is a phosphoserine (Ser64). The span at 67-81 (KEKERPEISPPSDFE) shows a compositional bias: basic and acidic residues. The segment at 69-112 (KERPEISPPSDFEHTIHVGFDAVTGEFTGMPEQWARLLQTSNIT) is GTPase-binding. The autoregulatory region stretch occupies residues 69-137 (KERPEISPPS…KFYDSNTVKQ (69 aa)). The CRIB domain occupies 74-87 (ISPPSDFEHTIHVG). The tract at residues 88 to 248 (FDAVTGEFTG…IVSIGDPKKK (161 aa)) is linker. Lys128 carries the post-translational modification N6-acetyllysine. Residue Thr134 is modified to Phosphothreonine. Position 139 is a phosphotyrosine (Tyr139). The residue at position 141 (Ser141) is a Phosphoserine. Residues 142-190 (FTPPEKDGFPSGTPALNTKGSETSAVVTEEDDDDEDAAPPVIAPRPDHT) form a disordered region. Residue Thr143 is modified to Phosphothreonine. Position 152 is a phosphoserine (Ser152). Residues Thr154, Thr159, and Thr169 each carry the phosphothreonine modification. Polar residues predominate over residues 155-167 (PALNTKGSETSAV). Over residues 169–178 (TEEDDDDEDA) the composition is skewed to acidic residues. Position 197 is a phosphoserine (Ser197). The disordered stretch occupies residues 204–228 (APVGDSNVDSGAKSSDKQKKKAKMT). A Nuclear localization signal motif is present at residues 245–251 (PKKKYTR). Residues 249–500 (YTRYEKIGQG…AKELLQHPFL (252 aa)) enclose the Protein kinase domain. ATP contacts are provided by residues 255 to 263 (IGQGASGTV) and Lys278. Asp368 acts as the Proton acceptor in catalysis. Phosphothreonine; by autocatalysis is present on Thr402.

The protein belongs to the protein kinase superfamily. STE Ser/Thr protein kinase family. STE20 subfamily. In terms of assembly, interacts tightly with GTP-bound but not GDP-bound CDC42/p21 and RAC1. Interacts with SH3MD4. Interacts with SCRIB. Interacts with ARHGEF7 and GIT1. PAK-2p34 interacts with ARHGAP10. Interacts with RAC1. In terms of processing, full-length PAK2 is autophosphorylated when activated by CDC42/p21. Following cleavage, both peptides, PAK-2p27 and PAK-2p34, become highly autophosphorylated. Autophosphorylation of PAK-2p27 can occur in the absence of any effectors and is dependent on phosphorylation of Thr-402, because PAK-2p27 is acting as an exogenous substrate. Post-translationally, during apoptosis proteolytically cleaved by caspase-3 or caspase-3-like proteases to yield active PAK-2p34. Ubiquitinated, leading to its proteasomal degradation.

It is found in the cytoplasm. The protein resides in the nucleus. The protein localises to the perinuclear region. Its subcellular location is the membrane. It carries out the reaction L-seryl-[protein] + ATP = O-phospho-L-seryl-[protein] + ADP + H(+). The catalysed reaction is L-threonyl-[protein] + ATP = O-phospho-L-threonyl-[protein] + ADP + H(+). With respect to regulation, activated by binding small G proteins. Binding of GTP-bound CDC42 or RAC1 to the autoregulatory region releases monomers from the autoinhibited dimer, enables phosphorylation of Thr-402 and allows the kinase domain to adopt an active structure. Following caspase cleavage, autophosphorylated PAK-2p34 is constitutively active. In terms of biological role, serine/threonine protein kinase that plays a role in a variety of different signaling pathways including cytoskeleton regulation, cell motility, cell cycle progression, apoptosis or proliferation. Acts as a downstream effector of the small GTPases CDC42 and RAC1. Activation by the binding of active CDC42 and RAC1 results in a conformational change and a subsequent autophosphorylation on several serine and/or threonine residues. Full-length PAK2 stimulates cell survival and cell growth. Phosphorylates MAPK4 and MAPK6 and activates the downstream target MAPKAPK5, a regulator of F-actin polymerization and cell migration. Phosphorylates JUN and plays an important role in EGF-induced cell proliferation. Phosphorylates many other substrates including histone H4 to promote assembly of H3.3 and H4 into nucleosomes, BAD, ribosomal protein S6, or MBP. Phosphorylates CASP7, thereby preventing its activity. Additionally, associates with ARHGEF7 and GIT1 to perform kinase-independent functions such as spindle orientation control during mitosis. On the other hand, apoptotic stimuli such as DNA damage lead to caspase-mediated cleavage of PAK2, generating PAK-2p34, an active p34 fragment that translocates to the nucleus and promotes cellular apoptosis involving the JNK signaling pathway. Caspase-activated PAK2 phosphorylates MKNK1 and reduces cellular translation. The chain is Serine/threonine-protein kinase PAK 2 (Pak2) from Rattus norvegicus (Rat).